We begin with the raw amino-acid sequence, 456 residues long: Bifunctional protein GlmU (456 aa).

The tract at residues 1–228 (MPQNTLNTVI…SHLAAGVNNK (228 aa)) is pyrophosphorylase. UDP-N-acetyl-alpha-D-glucosamine contacts are provided by residues 11-14 (LAAG), Lys-25, Gln-75, 80-81 (GT), 102-104 (YGD), Gly-138, Glu-153, Asn-168, and Asn-226. Asp-104 is a Mg(2+) binding site. Asn-226 serves as a coordination point for Mg(2+). The tract at residues 229-249 (RQLAELERIFQTEQAQELLKA) is linker. The interval 250-456 (GVTLRDPARF…GWVRPEKNKQ (207 aa)) is N-acetyltransferase. Residues Arg-332 and Lys-350 each coordinate UDP-N-acetyl-alpha-D-glucosamine. Residue His-362 is the Proton acceptor of the active site. Positions 365 and 376 each coordinate UDP-N-acetyl-alpha-D-glucosamine. Residues Ala-379, 385–386 (NY), Ser-404, Ala-422, and Arg-439 contribute to the acetyl-CoA site.

In the N-terminal section; belongs to the N-acetylglucosamine-1-phosphate uridyltransferase family. The protein in the C-terminal section; belongs to the transferase hexapeptide repeat family. As to quaternary structure, homotrimer. Mg(2+) is required as a cofactor.

The protein resides in the cytoplasm. It catalyses the reaction alpha-D-glucosamine 1-phosphate + acetyl-CoA = N-acetyl-alpha-D-glucosamine 1-phosphate + CoA + H(+). The catalysed reaction is N-acetyl-alpha-D-glucosamine 1-phosphate + UTP + H(+) = UDP-N-acetyl-alpha-D-glucosamine + diphosphate. Its pathway is nucleotide-sugar biosynthesis; UDP-N-acetyl-alpha-D-glucosamine biosynthesis; N-acetyl-alpha-D-glucosamine 1-phosphate from alpha-D-glucosamine 6-phosphate (route II): step 2/2. The protein operates within nucleotide-sugar biosynthesis; UDP-N-acetyl-alpha-D-glucosamine biosynthesis; UDP-N-acetyl-alpha-D-glucosamine from N-acetyl-alpha-D-glucosamine 1-phosphate: step 1/1. It participates in bacterial outer membrane biogenesis; LPS lipid A biosynthesis. In terms of biological role, catalyzes the last two sequential reactions in the de novo biosynthetic pathway for UDP-N-acetylglucosamine (UDP-GlcNAc). The C-terminal domain catalyzes the transfer of acetyl group from acetyl coenzyme A to glucosamine-1-phosphate (GlcN-1-P) to produce N-acetylglucosamine-1-phosphate (GlcNAc-1-P), which is converted into UDP-GlcNAc by the transfer of uridine 5-monophosphate (from uridine 5-triphosphate), a reaction catalyzed by the N-terminal domain. The polypeptide is Bifunctional protein GlmU (Neisseria gonorrhoeae).